A 377-amino-acid polypeptide reads, in one-letter code: Chaperone protein DnaJ (377 aa).

The J domain maps to D4–G69. The segment at G135–E213 adopts a CR-type zinc-finger fold. C148, C151, C165, C168, C187, C190, C201, and C204 together coordinate Zn(2+). CXXCXGXG motif repeat units follow at residues C148–G155, C165–G172, C187–G194, and C201–G208.

Belongs to the DnaJ family. In terms of assembly, homodimer. It depends on Zn(2+) as a cofactor.

It is found in the cytoplasm. In terms of biological role, participates actively in the response to hyperosmotic and heat shock by preventing the aggregation of stress-denatured proteins and by disaggregating proteins, also in an autonomous, DnaK-independent fashion. Unfolded proteins bind initially to DnaJ; upon interaction with the DnaJ-bound protein, DnaK hydrolyzes its bound ATP, resulting in the formation of a stable complex. GrpE releases ADP from DnaK; ATP binding to DnaK triggers the release of the substrate protein, thus completing the reaction cycle. Several rounds of ATP-dependent interactions between DnaJ, DnaK and GrpE are required for fully efficient folding. Also involved, together with DnaK and GrpE, in the DNA replication of plasmids through activation of initiation proteins. The polypeptide is Chaperone protein DnaJ (Brucella abortus (strain S19)).